A 605-amino-acid polypeptide reads, in one-letter code: Elongation factor 4 (605 aa).

The tr-type G domain occupies 11–193 (EKIRNFSIIA…QIVEKVPAPT (183 aa)). Residues 23-28 (DHGKST) and 140-143 (NKID) each bind GTP.

The protein belongs to the TRAFAC class translation factor GTPase superfamily. Classic translation factor GTPase family. LepA subfamily.

It localises to the cell membrane. It catalyses the reaction GTP + H2O = GDP + phosphate + H(+). Functionally, required for accurate and efficient protein synthesis under certain stress conditions. May act as a fidelity factor of the translation reaction, by catalyzing a one-codon backward translocation of tRNAs on improperly translocated ribosomes. Back-translocation proceeds from a post-translocation (POST) complex to a pre-translocation (PRE) complex, thus giving elongation factor G a second chance to translocate the tRNAs correctly. Binds to ribosomes in a GTP-dependent manner. The protein is Elongation factor 4 of Streptococcus pyogenes serotype M4 (strain MGAS10750).